Here is a 145-residue protein sequence, read N- to C-terminus: D-aminoacyl-tRNA deacylase (145 aa).

The short motif at glycine 137 to proline 138 is the Gly-cisPro motif, important for rejection of L-amino acids element.

This sequence belongs to the DTD family. Homodimer.

It is found in the cytoplasm. It catalyses the reaction glycyl-tRNA(Ala) + H2O = tRNA(Ala) + glycine + H(+). It carries out the reaction a D-aminoacyl-tRNA + H2O = a tRNA + a D-alpha-amino acid + H(+). An aminoacyl-tRNA editing enzyme that deacylates mischarged D-aminoacyl-tRNAs. Also deacylates mischarged glycyl-tRNA(Ala), protecting cells against glycine mischarging by AlaRS. Acts via tRNA-based rather than protein-based catalysis; rejects L-amino acids rather than detecting D-amino acids in the active site. By recycling D-aminoacyl-tRNA to D-amino acids and free tRNA molecules, this enzyme counteracts the toxicity associated with the formation of D-aminoacyl-tRNA entities in vivo and helps enforce protein L-homochirality. The chain is D-aminoacyl-tRNA deacylase from Azotobacter vinelandii (strain DJ / ATCC BAA-1303).